The sequence spans 126 residues: Large ribosomal subunit protein uL22c (126 aa).

Belongs to the universal ribosomal protein uL22 family. Part of the 50S ribosomal subunit.

The protein localises to the plastid. It localises to the chloroplast. In terms of biological role, this protein binds specifically to 23S rRNA. Functionally, the globular domain of the protein is located near the polypeptide exit tunnel on the outside of the subunit, while an extended beta-hairpin is found that lines the wall of the exit tunnel in the center of the 70S ribosome. The polypeptide is Large ribosomal subunit protein uL22c (rpl22) (Cryptomeria japonica (Japanese cedar)).